A 366-amino-acid polypeptide reads, in one-letter code: Beta sliding clamp (366 aa).

The i stretch occupies residues 1–125 (MKFTVEREHL…FPNLDDWQSE (125 aa)). Residues 126-253 (VEFTLPQATM…YRRVLPKNPD (128 aa)) form an II region. An III region spans residues 254–366 (KHLEAGCDLL…AAYVVMPMRL (113 aa)).

It belongs to the beta sliding clamp family. In terms of assembly, forms a ring-shaped head-to-tail homodimer around DNA which binds and tethers DNA polymerases and other proteins to the DNA. The DNA replisome complex has a single clamp-loading complex (3 tau and 1 each of delta, delta', psi and chi subunits) which binds 3 Pol III cores (1 core on the leading strand and 2 on the lagging strand) each with a beta sliding clamp dimer. Additional proteins in the replisome are other copies of gamma, psi and chi, Ssb, DNA helicase and RNA primase.

Its subcellular location is the cytoplasm. Its function is as follows. Confers DNA tethering and processivity to DNA polymerases and other proteins. Acts as a clamp, forming a ring around DNA (a reaction catalyzed by the clamp-loading complex) which diffuses in an ATP-independent manner freely and bidirectionally along dsDNA. Initially characterized for its ability to contact the catalytic subunit of DNA polymerase III (Pol III), a complex, multichain enzyme responsible for most of the replicative synthesis in bacteria; Pol III exhibits 3'-5' exonuclease proofreading activity. The beta chain is required for initiation of replication as well as for processivity of DNA replication. The protein is Beta sliding clamp (dnaN) of Escherichia coli O157:H7.